The chain runs to 724 residues: ATPase family protein 2 homolog (724 aa).

Residues 281–287 (PGSGKTL) and 503–508 (GCSKTL) contribute to the ATP site.

Belongs to the AAA ATPase family. AFG2 subfamily. As to quaternary structure, homohexamer; ATP binding induces oligomerization. Forms a ring-shaped particle of about 12 nm diameter, that displays 6-fold radial symmetry. Interacts (via N-terminus) with kinase air-2; the interaction is direct and inhibits air-2 kinase activity in an ATPase-dependent manner.

The protein resides in the cytoplasm. It catalyses the reaction ATP + H2O = ADP + phosphate + H(+). ATP-dependent chaperone which uses the energy provided by ATP hydrolysis to generate mechanical force to disassemble protein complexes. Required for various steps of embryonic mitosis including centrosome duplication, spindle assembly, ER dynamics and cell cycle progression. Regulates the stability and activity of kinase air-2, a component of the chromosomal passenger complex (CPC). Inhibits air-2 kinase activity from metaphase to late telophase and negatively regulates air-2 stability during mitotic exit. Controls ER transition into sheet-like structures at the onset of mitosis, possibly by regulating homotypic membrane fusion. This is ATPase family protein 2 homolog from Caenorhabditis elegans.